The chain runs to 335 residues: Probable cytosolic iron-sulfur protein assembly protein Ciao1 (335 aa).

WD repeat units lie at residues 12–51, 57–96, 101–140, 146–185, 192–231, 250–289, and 301–335; these read GHKG…WSTK, GHKR…FECN, GHEN…EFEC, SHTQ…NDWD, SHTS…NSAG, QHSR…KPDE, and AHDQ…KVTE.

This sequence belongs to the WD repeat CIA1 family.

Its function is as follows. Essential component of the cytosolic iron-sulfur (Fe/S) protein assembly machinery. Required for the maturation of extramitochondrial Fe/S proteins. The protein is Probable cytosolic iron-sulfur protein assembly protein Ciao1 of Drosophila yakuba (Fruit fly).